The primary structure comprises 346 residues: Protein-glutamate methylesterase/protein-glutamine glutaminase (346 aa).

Residues K6–L123 enclose the Response regulatory domain. D57 is modified (4-aspartylphosphate). The CheB-type methylesterase domain maps to P155–R346. Residues S166, H193, and D289 contribute to the active site.

This sequence belongs to the CheB family. Post-translationally, phosphorylated by CheA. Phosphorylation of the N-terminal regulatory domain activates the methylesterase activity.

It is found in the cytoplasm. It carries out the reaction [protein]-L-glutamate 5-O-methyl ester + H2O = L-glutamyl-[protein] + methanol + H(+). The catalysed reaction is L-glutaminyl-[protein] + H2O = L-glutamyl-[protein] + NH4(+). Involved in chemotaxis. Part of a chemotaxis signal transduction system that modulates chemotaxis in response to various stimuli. Catalyzes the demethylation of specific methylglutamate residues introduced into the chemoreceptors (methyl-accepting chemotaxis proteins or MCP) by CheR. Also mediates the irreversible deamidation of specific glutamine residues to glutamic acid. In Halalkalibacterium halodurans (strain ATCC BAA-125 / DSM 18197 / FERM 7344 / JCM 9153 / C-125) (Bacillus halodurans), this protein is Protein-glutamate methylesterase/protein-glutamine glutaminase.